The following is a 412-amino-acid chain: Glutamate dehydrogenase (412 aa).

Lys102 is a catalytic residue.

Belongs to the Glu/Leu/Phe/Val dehydrogenases family. In terms of tissue distribution, in roots, stems, leaves and flowers but not in fruits.

The protein localises to the mitochondrion matrix. It carries out the reaction L-glutamate + NAD(+) + H2O = 2-oxoglutarate + NH4(+) + NADH + H(+). It catalyses the reaction L-glutamate + NADP(+) + H2O = 2-oxoglutarate + NH4(+) + NADPH + H(+). The chain is Glutamate dehydrogenase (GDH1) from Solanum lycopersicum (Tomato).